An 89-amino-acid polypeptide reads, in one-letter code: Small ribosomal subunit protein uS15 (89 aa).

Basic and acidic residues predominate over residues 1–21 (MSITTEEKARVMKEYGTKDGD). Residues 1-24 (MSITTEEKARVMKEYGTKDGDTGS) are disordered.

It belongs to the universal ribosomal protein uS15 family. In terms of assembly, part of the 30S ribosomal subunit. Forms a bridge to the 50S subunit in the 70S ribosome, contacting the 23S rRNA.

One of the primary rRNA binding proteins, it binds directly to 16S rRNA where it helps nucleate assembly of the platform of the 30S subunit by binding and bridging several RNA helices of the 16S rRNA. Functionally, forms an intersubunit bridge (bridge B4) with the 23S rRNA of the 50S subunit in the ribosome. This Ruegeria pomeroyi (strain ATCC 700808 / DSM 15171 / DSS-3) (Silicibacter pomeroyi) protein is Small ribosomal subunit protein uS15.